The following is a 361-amino-acid chain: Myricetin 3-O-methyltransferase 3 (361 aa).

Asp-229 contacts S-adenosyl-L-methionine. Catalysis depends on His-267, which acts as the Proton acceptor.

This sequence belongs to the class I-like SAM-binding methyltransferase superfamily. Cation-independent O-methyltransferase family. In terms of assembly, homodimer. In terms of tissue distribution, mainly expressed in leaves secreting glandular trichomes types 1 and 4 and, to a lesser extent, in storage trichomes type 6.

The catalysed reaction is kaempferol + S-adenosyl-L-methionine = 3-O-methylkaempferol + S-adenosyl-L-homocysteine + H(+). The enzyme catalyses quercetin + S-adenosyl-L-methionine = 3',4',5,7-tetrahydroxy-3-methoxyflavone + S-adenosyl-L-homocysteine + H(+). It catalyses the reaction myricetin + S-adenosyl-L-methionine = 3-O-methylmyricetin + S-adenosyl-L-homocysteine + H(+). It carries out the reaction kaempferide + S-adenosyl-L-methionine = 3,4'-O-dimethylkaempferol + S-adenosyl-L-homocysteine + H(+). The catalysed reaction is isorhamnetin + S-adenosyl-L-methionine = 3,3'-O-dimethylquercetin + S-adenosyl-L-homocysteine + H(+). The enzyme catalyses rhamnetin + S-adenosyl-L-methionine = 3',4',5-trihydroxy-3,7-dimethoxyflavone + S-adenosyl-L-homocysteine + H(+). It catalyses the reaction laricitrin + S-adenosyl-L-methionine = 3,3'-O-dimethylmyricetin + S-adenosyl-L-homocysteine + H(+). It carries out the reaction syringetin + S-adenosyl-L-methionine = 3,3',5'-O-trimethylmyricetin + S-adenosyl-L-homocysteine + H(+). The protein operates within flavonoid metabolism. Flavonoid 3-O-methyltransferase involved in the biosynthesis of polymethoxylated flavonoids natural products such as myricetin derivatives, aroma compounds possessing antioxidant properties and exhibiting pharmacological activities such as anti-carcinogen, anti-viral, anti-thrombotic, anti-diabetic, anti-atherosclerotic, and anti-inflammatory effects. Catalyzes S-adenosylmethionine-dependent regioselective 3-O-methylation of flavonoids; active on various hydroxylated flavonoid substrates. Active with myricetin, quercetin, kaempferol, 4'-methyl kaempferol (kaempferide), 3'-methyl quercetin (isorhamnetin), 7-methyl quercetin (rhamnetin), 3'-methyl myricetin (laricitrin) and 3',5'-dimethyl myricetin (syringetin), thus producing 3-methyl myricetin, 3-methyl quercetin, 3-methyl kaempferol, 4',3-methyl kaempferol, 3',3-methyl quercetin, 7,3-dimethyl quercetin, 3',3-dimethyl myricetin and 3',5',3-dimethyl myricetin, respectively. Inactive with flavonol substrates methylated at the 3-hydroxyl position such as 3-O-methyl quercetin. This chain is Myricetin 3-O-methyltransferase 3, found in Solanum habrochaites (Wild tomato).